A 213-amino-acid chain; its full sequence is Probable lipid phosphate phosphatase beta (213 aa).

The next 5 membrane-spanning stretches (helical) occupy residues 30-50 (PFLPPFVLLLLEISADFRFSF), 67-87 (VPFLLGLLFDLIFVGIVKLIF), 118-138 (VFFVAASVHFFSAAAEASMTG), 158-178 (VEVVVVVWIWATVTAISRILL), and 181-201 (HYVLDVAAGAFLGIVEALFAL).

It belongs to the PA-phosphatase related phosphoesterase family.

It localises to the membrane. The chain is Probable lipid phosphate phosphatase beta (LPPB) from Arabidopsis thaliana (Mouse-ear cress).